We begin with the raw amino-acid sequence, 203 residues long: High frequency lysogenization protein HflD homolog (203 aa).

The protein belongs to the HflD family.

It localises to the cytoplasm. The protein localises to the cell inner membrane. The protein is High frequency lysogenization protein HflD homolog of Histophilus somni (strain 2336) (Haemophilus somnus).